Consider the following 236-residue polypeptide: Leucyl/phenylalanyl-tRNA--protein transferase (236 aa).

The protein belongs to the L/F-transferase family.

The protein localises to the cytoplasm. The catalysed reaction is N-terminal L-lysyl-[protein] + L-leucyl-tRNA(Leu) = N-terminal L-leucyl-L-lysyl-[protein] + tRNA(Leu) + H(+). It carries out the reaction N-terminal L-arginyl-[protein] + L-leucyl-tRNA(Leu) = N-terminal L-leucyl-L-arginyl-[protein] + tRNA(Leu) + H(+). It catalyses the reaction L-phenylalanyl-tRNA(Phe) + an N-terminal L-alpha-aminoacyl-[protein] = an N-terminal L-phenylalanyl-L-alpha-aminoacyl-[protein] + tRNA(Phe). Functionally, functions in the N-end rule pathway of protein degradation where it conjugates Leu, Phe and, less efficiently, Met from aminoacyl-tRNAs to the N-termini of proteins containing an N-terminal arginine or lysine. In Idiomarina loihiensis (strain ATCC BAA-735 / DSM 15497 / L2-TR), this protein is Leucyl/phenylalanyl-tRNA--protein transferase.